The following is a 534-amino-acid chain: CTP synthase (534 aa).

Residues 1-265 (MKYIVVTGGV…TTRLMKHLKL (265 aa)) are amidoligase domain. Residue serine 12 participates in CTP binding. Serine 12 serves as a coordination point for UTP. ATP is bound at residue 13–18 (GLGKGI). Position 53 (tyrosine 53) interacts with L-glutamine. Aspartate 70 provides a ligand contact to ATP. Mg(2+) is bound by residues aspartate 70 and glutamate 140. CTP-binding positions include 147-149 (DIE), 186-191 (KTKPSQ), and lysine 222. Residues 186–191 (KTKPSQ) and lysine 222 contribute to the UTP site. The Glutamine amidotransferase type-1 domain occupies 289-530 (KLAIVGKYTN…VRAMCKYNKE (242 aa)). Position 352 (glycine 352) interacts with L-glutamine. Cysteine 379 acts as the Nucleophile; for glutamine hydrolysis in catalysis. Residues 380 to 383 (LGMQ), glutamate 403, and arginine 460 each bind L-glutamine. Catalysis depends on residues histidine 503 and glutamate 505.

This sequence belongs to the CTP synthase family. Homotetramer.

The enzyme catalyses UTP + L-glutamine + ATP + H2O = CTP + L-glutamate + ADP + phosphate + 2 H(+). The catalysed reaction is L-glutamine + H2O = L-glutamate + NH4(+). It catalyses the reaction UTP + NH4(+) + ATP = CTP + ADP + phosphate + 2 H(+). The protein operates within pyrimidine metabolism; CTP biosynthesis via de novo pathway; CTP from UDP: step 2/2. Allosterically activated by GTP, when glutamine is the substrate; GTP has no effect on the reaction when ammonia is the substrate. The allosteric effector GTP functions by stabilizing the protein conformation that binds the tetrahedral intermediate(s) formed during glutamine hydrolysis. Inhibited by the product CTP, via allosteric rather than competitive inhibition. Functionally, catalyzes the ATP-dependent amination of UTP to CTP with either L-glutamine or ammonia as the source of nitrogen. Regulates intracellular CTP levels through interactions with the four ribonucleotide triphosphates. This Methanosarcina acetivorans (strain ATCC 35395 / DSM 2834 / JCM 12185 / C2A) protein is CTP synthase.